Here is an 812-residue protein sequence, read N- to C-terminus: Lon protease (812 aa).

Residues 22 to 215 (YAVLPLRDIV…KALSFMEAEI (194 aa)) form the Lon N-terminal domain. 367 to 374 (GPPGVGKT) is an ATP binding site. In terms of domain architecture, Lon proteolytic spans 602 to 783 (EDQVGVVTGL…GEVLKHALVR (182 aa)). Active-site residues include Ser-689 and Lys-732. The disordered stretch occupies residues 787–812 (PIEWTEQENPTAVPPVEDEAGASLAH).

The protein belongs to the peptidase S16 family. Homohexamer. Organized in a ring with a central cavity.

Its subcellular location is the cytoplasm. It catalyses the reaction Hydrolysis of proteins in presence of ATP.. In terms of biological role, ATP-dependent serine protease that mediates the selective degradation of mutant and abnormal proteins as well as certain short-lived regulatory proteins. Required for cellular homeostasis and for survival from DNA damage and developmental changes induced by stress. Degrades polypeptides processively to yield small peptide fragments that are 5 to 10 amino acids long. Binds to DNA in a double-stranded, site-specific manner. Required for wild-type virulence during the initial stages of infection in the mouse model, but not essential for the establishment and maintenance of chronic infection in this host. The polypeptide is Lon protease (Brucella abortus (strain 2308)).